Consider the following 67-residue polypeptide: ATP synthase F(0) complex subunit 8 (67 aa).

The helical transmembrane segment at 8 to 24 threads the bilayer; sequence TWFTTILATITTLFILF. The residue at position 54 (lysine 54) is an N6-acetyllysine; alternate. Lysine 54 bears the N6-succinyllysine; alternate mark. Lysine 57 carries the N6-acetyllysine modification.

This sequence belongs to the ATPase protein 8 family. Component of the ATP synthase complex composed at least of ATP5F1A/subunit alpha, ATP5F1B/subunit beta, ATP5MC1/subunit c (homooctomer), MT-ATP6/subunit a, MT-ATP8/subunit 8, ATP5ME/subunit e, ATP5MF/subunit f, ATP5MG/subunit g, ATP5MK/subunit k, ATP5MJ/subunit j, ATP5F1C/subunit gamma, ATP5F1D/subunit delta, ATP5F1E/subunit epsilon, ATP5PF/subunit F6, ATP5PB/subunit b, ATP5PD/subunit d, ATP5PO/subunit OSCP. ATP synthase complex consists of a soluble F(1) head domain (subunits alpha(3) and beta(3)) - the catalytic core - and a membrane F(0) domain - the membrane proton channel (subunits c, a, 8, e, f, g, k and j). These two domains are linked by a central stalk (subunits gamma, delta, and epsilon) rotating inside the F1 region and a stationary peripheral stalk (subunits F6, b, d, and OSCP). Interacts with PRICKLE3.

It localises to the mitochondrion membrane. Its function is as follows. Subunit 8, of the mitochondrial membrane ATP synthase complex (F(1)F(0) ATP synthase or Complex V) that produces ATP from ADP in the presence of a proton gradient across the membrane which is generated by electron transport complexes of the respiratory chain. ATP synthase complex consist of a soluble F(1) head domain - the catalytic core - and a membrane F(1) domain - the membrane proton channel. These two domains are linked by a central stalk rotating inside the F(1) region and a stationary peripheral stalk. During catalysis, ATP synthesis in the catalytic domain of F(1) is coupled via a rotary mechanism of the central stalk subunits to proton translocation. In vivo, can only synthesize ATP although its ATP hydrolase activity can be activated artificially in vitro. Part of the complex F(0) domain. This is ATP synthase F(0) complex subunit 8 from Talpa europaea (European mole).